A 202-amino-acid chain; its full sequence is Orotate phosphoribosyltransferase (202 aa).

5-phospho-alpha-D-ribose 1-diphosphate is bound by residues lysine 93 and 113–121 (EDIITTGGS). Residues threonine 117 and arginine 145 each coordinate orotate.

The protein belongs to the purine/pyrimidine phosphoribosyltransferase family. PyrE subfamily. As to quaternary structure, homodimer. Mg(2+) is required as a cofactor.

It carries out the reaction orotidine 5'-phosphate + diphosphate = orotate + 5-phospho-alpha-D-ribose 1-diphosphate. It functions in the pathway pyrimidine metabolism; UMP biosynthesis via de novo pathway; UMP from orotate: step 1/2. Functionally, catalyzes the transfer of a ribosyl phosphate group from 5-phosphoribose 1-diphosphate to orotate, leading to the formation of orotidine monophosphate (OMP). This Campylobacter hominis (strain ATCC BAA-381 / DSM 21671 / CCUG 45161 / LMG 19568 / NCTC 13146 / CH001A) protein is Orotate phosphoribosyltransferase.